The following is a 120-amino-acid chain: Dihydroneopterin triphosphate 2'-epimerase (120 aa).

This sequence belongs to the DHNA family. As to quaternary structure, homooctamer.

It catalyses the reaction 7,8-dihydroneopterin 3'-triphosphate = 7,8-dihydromonapterin 3'-triphosphate. Functionally, catalyzes the epimerization of carbon 2' of the side chain of 7,8-dihydroneopterin triphosphate (H2NTP) to form 7,8-dihydromonapterin triphosphate (H2MTP). Is required for tetrahydromonapterin biosynthesis. The polypeptide is Dihydroneopterin triphosphate 2'-epimerase (folX) (Escherichia coli O157:H7).